The following is a 304-amino-acid chain: Lipid droplet-associated triacylglycerol lipase (304 aa).

Topologically, residues 1-155 are lumenal; the sequence is MTVKEYTKSK…MGIKMTAALR (155 aa). An N-linked (GlcNAc...) asparagine glycan is attached at N95. The GXSXG signature appears at 107-111; the sequence is GHSVG. S109 (nucleophile) is an active-site residue. Residues 156 to 176 lie within the membrane without spanning it; the sequence is YIPPLAHVVSLFSYIFFYWIL. Residues 177–304 are Lumenal-facing; it reads SEGFSRFIID…HAEYAINAFF (128 aa).

Belongs to the AB hydrolase superfamily. LDAH family.

The protein localises to the lipid droplet. The protein resides in the membrane. The catalysed reaction is a triacylglycerol + H2O = a diacylglycerol + a fatty acid + H(+). Shows both triacylglycerol (TAG) lipase and ester hydrolase activities. May play a role in TAG homeostasis. The protein is Lipid droplet-associated triacylglycerol lipase of Saccharomyces cerevisiae (strain ATCC 204508 / S288c) (Baker's yeast).